Reading from the N-terminus, the 940-residue chain is Antiviral innate immune response receptor RIG-I (940 aa).

CARD domains are found at residues M1–E87 and W92–K172. Glycyl lysine isopeptide (Lys-Gly) (interchain with G-Cter in ubiquitin) cross-links involve residues K48, K96, K154, K164, K172, and K190. Residues E219 to G928 form an interaction with ZC3HAV1 region. The region spanning A249–L428 is the Helicase ATP-binding domain. A262–T269 is an ATP binding site. A DECH box motif is present at residues D370–H373. The 167-residue stretch at K613–F779 folds into the Helicase C-terminal domain. The tract at residues G738–G928 is mediates interaction with RNF135. At T773 the chain carries Phosphothreonine; by CK2. The region spanning D795–G928 is the RLR CTR domain. C813 is a Zn(2+) binding site. A Glycyl lysine isopeptide (Lys-Gly) (interchain with G-Cter in ubiquitin) cross-link involves residue K815. Position 816 (C816) interacts with Zn(2+). The residue at position 861 (K861) is an N6-acetyllysine. Positions 867 and 872 each coordinate Zn(2+). K912 is modified (N6-acetyllysine).

It belongs to the helicase family. RLR subfamily. Monomer; maintained as a monomer in an autoinhibited state. Upon binding of viral RNAs and conformational shift, homooligomerizes and forms filaments on these molecules. Interacts (via tandem CARD domain) with MAVS/IPS1 promoting its filamentation. Interacts with DHX58/LGP2, IKBKE, TBK1 and STING1. Interacts (via CARD domain) with TRIM25 (via SPRY domain). Interacts (double-stranded RNA-bound oligomeric form) with RNF135 (homodimer); involved in RNA length-dependent activation of the RIG-I signaling pathway. Interacts with CYLD. Interacts with NLRC5; blocks the interaction of MAVS/IPS1 to RIGI. Interacts with SRC. Interacts with DDX60. Interacts with ZC3HAV1 (via zinc-fingers) in an RNA-dependent manner. Interacts (via tandem CARD domain) with SEC14L1; the interaction is direct and impairs the interaction of RIGI with MAVS/IPS1. Interacts with VCP/p97; interaction is direct and allows the recruitment of RNF125 and subsequent ubiquitination and degradation. Interacts with NOP53; may regulate RIGI through USP15-mediated 'Lys-63'-linked deubiquitination. Interacts with SIGLEC10, CBL and PTPN11; within a negative feedback loop leading to RIGI degradation. Interacts with LRRC25. Interacts with ZCCHC3; leading to activation of RIGI. Interacts with RNF123. Interacts with UBE2D3 and UBE2N; E2 ubiquitin ligases involved in RNF135-mediated ubiquitination of RIGI and activation of the RIG-I signaling pathway. Interacts with IFIT3. Interacts with DDX3X. Interacts with RTN3. Interacts with ARL16; this interaction is GTP-dependent and induced upon viral infection; this interaction suppresses the RNA sensing activity of RIGI. Interacts with DHX16; this interaction enhances RIGI-mediated antiviral response. Interacts with IRGM; promoting RIGI degradation. Interacts with IFI6; this interaction inhibits RIGI activation. Interacts with ECSIT; this interaction bridges RIGI to the MAVS complex at the mitochondrion. Interacts with YWHAE; this interaction drives RIGI at the mitochondrion. In terms of processing, phosphorylated in resting cells and dephosphorylated in RNA virus-infected cells. Phosphorylation at Thr-773 results in inhibition of its activity while dephosphorylation at these sites results in its activation. Post-translationally, ISGylated. Conjugated to ubiquitin-like protein ISG15 upon IFN-beta stimulation. ISGylation negatively regulates its function in antiviral signaling response. Sumoylated, probably by MUL1; inhibiting its polyubiquitination. In terms of processing, acetylated in response to RNA virus infection. Deacetylated by HDAC6 in the presence of viral mRNAs which is required for detection of viral RNA by RIGI. Post-translationally, ubiquitinated. 'Lys-63' ubiquitination by RNF135, which occurs after RNA-binding and homodimerization, releases the autoinhibition of the CARD domains by the RLR CTR domain, an essential step in the activation of the RIG-I signaling pathway. Also ubiquitinated by TRIM4. Also undergoes 'Lys-48' ubiquitination by RNF125 that leads to proteasomal degradation. 'Lys-48' ubiquitination follows viral infection and is enhanced by 'Lys-63'-linked ubiquitination of the CARD domains that promotes interaction with VCP/p97 and subsequent recruitment of RNF125. Within a negative feedback loop involving SIGLEC10 and PTPN11, 'Lys-48' ubiquitination at Lys-815 by CBL also elicits the proteasomal degradation of RIGI. Deubiquitinated by CYLD, a protease that selectively cleaves 'Lys-63'-linked ubiquitin chains. Also probably deubiquitinated by USP17L2/USP17 that cleaves 'Lys-48'- and 'Lys-63'-linked ubiquitin chains and positively regulates the receptor. Ubiquitinated by TRIM40 via 'Lys-48'-linked ubiquitination; leading to proteasomal degradation. Deubiquitinated by USP27X that cleaves 'Lys-63'-linked ubiquitin chains and inhibits the innate immune receptor activity. Deubiquitinated by USP3 that also cleaves 'Lys-63'-linked ubiquitin chains and inhibits the innate immune receptor activity. Degraded via selective autophagy following interaction with IRGM. IRGM promotes RIGI recruitment to autophagosome membranes, promoting its SQSTM1/p62-dependent autophagic degradation. Ubiquitously expressed, with highest levels in spleen, liver, intestine and heart. Up-regulated in tracheobronchial lymph node and tonsils during porcine reproductive and respiratory syndrome virus (PRRSV) infection.

It is found in the cytoplasm. The protein localises to the cell projection. The protein resides in the ruffle membrane. Its subcellular location is the cytoskeleton. It localises to the cell junction. It is found in the tight junction. It catalyses the reaction ATP + H2O = ADP + phosphate + H(+). In terms of biological role, innate immune receptor that senses cytoplasmic viral nucleic acids and activates a downstream signaling cascade leading to the production of type I interferons and pro-inflammatory cytokines. Forms a ribonucleoprotein complex with viral RNAs on which it homooligomerizes to form filaments. The homooligomerization allows the recruitment of RNF135 an E3 ubiquitin-protein ligase that activates and amplifies the RIG-I-mediated antiviral signaling in an RNA length-dependent manner through ubiquitination-dependent and -independent mechanisms. Upon activation, associates with mitochondria antiviral signaling protein (MAVS/IPS1) that activates the IKK-related kinases TBK1 and IKBKE which in turn phosphorylate the interferon regulatory factors IRF3 and IRF7, activating transcription of antiviral immunological genes including the IFN-alpha and IFN-beta interferons. Ligands include: 5'-triphosphorylated ssRNA and dsRNA and short dsRNA (&lt;1 kb in length). In addition to the 5'-triphosphate moiety, blunt-end base pairing at the 5'-end of the RNA is very essential. Overhangs at the non-triphosphorylated end of the dsRNA RNA have no major impact on its activity. A 3'overhang at the 5'triphosphate end decreases and any 5'overhang at the 5' triphosphate end abolishes its activity. Detects both positive and negative strand RNA viruses including members of the families Paramyxoviridae, Rhabdoviridae: vesicular stomatitis virus (VSV) Orthomyxoviridae: influenza A and B virus, Flaviviridae: Japanese encephalitis virus (JEV). It also detects rotavirus and reovirus. Also involved in antiviral signaling in response to viruses containing a dsDNA genome. Detects dsRNA produced from non-self dsDNA by RNA polymerase III. May play important roles in granulocyte production and differentiation, bacterial phagocytosis and in the regulation of cell migration. This chain is Antiviral innate immune response receptor RIG-I, found in Sus scrofa (Pig).